Consider the following 318-residue polypeptide: Glycine--tRNA ligase alpha subunit (318 aa).

The protein belongs to the class-II aminoacyl-tRNA synthetase family. As to quaternary structure, tetramer of two alpha and two beta subunits.

It localises to the cytoplasm. It carries out the reaction tRNA(Gly) + glycine + ATP = glycyl-tRNA(Gly) + AMP + diphosphate. This Methylibium petroleiphilum (strain ATCC BAA-1232 / LMG 22953 / PM1) protein is Glycine--tRNA ligase alpha subunit.